A 197-amino-acid polypeptide reads, in one-letter code: Putative mediator of RNA polymerase II transcription subunit 9 (197 aa).

Residues 83-117 (GINRSLENQEELLKTYKQTLKKKVELLEKLKKLEI) are a coiled coil. The span at 126-144 (STSSQSPQIQSKLELQTEL) shows a compositional bias: polar residues. Residues 126-197 (STSSQSPQIQ…KETTEDIMKE (72 aa)) are disordered. The span at 145 to 182 (SQTEPSQTEPSQTEPSQTEPSQTESSQIESSQIESSQT) shows a compositional bias: low complexity. A compositionally biased stretch (basic and acidic residues) spans 183–197 (ETEKSKETTEDIMKE).

It belongs to the Mediator complex subunit 9 family. As to quaternary structure, component of the Mediator complex.

Its subcellular location is the nucleus. In terms of biological role, component of the Mediator complex, a coactivator involved in the regulated transcription of nearly all RNA polymerase II-dependent genes. Mediator functions as a bridge to convey information from gene-specific regulatory proteins to the basal RNA polymerase II transcription machinery. Mediator is recruited to promoters by direct interactions with regulatory proteins and serves as a scaffold for the assembly of a functional preinitiation complex with RNA polymerase II and the general transcription factors. The chain is Putative mediator of RNA polymerase II transcription subunit 9 (med9) from Dictyostelium discoideum (Social amoeba).